The sequence spans 281 residues: VGFVIVTFQEQGESEYKNCELDKNQRQCVQYALKARPLRRYIPKNPYQYQIWYVVTSSYFEYLMFFLIMLNTICLGMQHYNQSAEMNHVSDILNVAFTVLFTLEMILKLMAFKAKGYFGDPWNVFDFLIVIGSIIDVILSEIDDPDDNSRVSITFFRLFRVMRLVKLLSRGEGVRTLLWTFIKSFQALPYVALLIVMLFFIYAVIGMQMFGKIAMVDGTQINRNNNFQTFPQAVLLLFRCATGEAWQEILLDCSYGKRCDPESDYAEGEEYTCGTGFAYFY.

The stretch at 1–8 (VGFVIVTF) is one III repeat. Positions 1-17 (VGFVIVTFQEQGESEYK) are dihydropyridine binding. The IV repeat unit spans residues 45-281 (NPYQYQIWYV…TCGTGFAYFY (237 aa)). Residues 59–80 (YFEYLMFFLIMLNTICLGMQHY) traverse the membrane as a helical segment. Asparagine 81 carries N-linked (GlcNAc...) asparagine glycosylation. A helical transmembrane segment spans residues 89-110 (VSDILNVAFTVLFTLEMILKLM). A helical transmembrane segment spans residues 121–140 (PWNVFDFLIVIGSIIDVILS). The chain crosses the membrane as a helical span at residues 153-171 (ITFFRLFRVMRLVKLLSRG). A helical transmembrane segment spans residues 190–210 (YVALLIVMLFFIYAVIGMQMF). Positions 233–251 (AVLLLFRCATGEAWQEILL) form an intramembrane region, pore-forming. A Selectivity filter of repeat IV motif is present at residues 242–245 (TGEA). Positions 258 to 281 (RCDPESDYAEGEEYTCGTGFAYFY) are dihydropyridine binding. Cysteine 259 and cysteine 273 form a disulfide bridge. The segment at 270-281 (EYTCGTGFAYFY) is phenylalkylamine binding.

The protein belongs to the calcium channel alpha-1 subunit (TC 1.A.1.11) family. CACNA1S subfamily. In terms of assembly, component of a calcium channel complex consisting of a pore-forming alpha subunit (CACNA1S) and the ancillary subunits CACNB1 or CACNB2, CACNG1 and CACNA2D1. The channel complex contains alpha, beta, gamma and delta subunits in a 1:1:1:1 ratio, i.e. it contains either CACNB1 or CACNB2. CACNA1S channel activity is modulated by the auxiliary subunits (CACNB1 or CACNB2, CACNG1 and CACNA2D1). Interacts with DYSF and JSRP1. Interacts with RYR1. Interacts with CALM. Post-translationally, the alpha-1S subunit is found in two isoforms in the skeletal muscle: a minor form of 212 kDa containing the complete amino acid sequence, and a major form of 190 kDa derived from the full-length form by post-translational proteolysis close to Phe-1690. In terms of processing, both the minor and major forms are phosphorylated in vitro by PKA. Phosphorylation by PKA activates the calcium channel.

It is found in the cell membrane. Its subcellular location is the sarcolemma. The protein localises to the T-tubule. It catalyses the reaction Ca(2+)(in) = Ca(2+)(out). Channel activity is blocked by dihydropyridines (DHP), phenylalkylamines, and by benzothiazepines. In terms of biological role, pore-forming, alpha-1S subunit of the voltage-gated calcium channel that gives rise to L-type calcium currents in skeletal muscle. Calcium channels containing the alpha-1S subunit play an important role in excitation-contraction coupling in skeletal muscle via their interaction with RYR1, which triggers Ca(2+) release from the sarcplasmic reticulum and ultimately results in muscle contraction. Long-lasting (L-type) calcium channels belong to the 'high-voltage activated' (HVA) group. This is Voltage-dependent L-type calcium channel subunit alpha-1S (CACNA1S) from Gallus gallus (Chicken).